A 293-amino-acid polypeptide reads, in one-letter code: MPWIQLKLNTTGANAEDLSDALMEAGAVSITFQDTHDTPVFEPLPGETRLWGDTDVIGLFDAETDMNDVVAILENHPLLGAGFAHKIEQLEDKDWEREWMDNFHPMRFGERLWICPSWRDVPDENAVNVMLDPGLAFGTGTHPTTSLCLQWLDSLDLTGKIVIDFGCGSGILAIAALKLGAAKAIGIDIDPQAIQASRDNAERNGVSDRLELYLPKDQPEEMKADVVVANILAGPLRELAPLISVLPVSGGLLGLSGILASQAESVCEAYVDSFALDPVVEKEEWCRITGRKN.

The S-adenosyl-L-methionine site is built by threonine 145, glycine 166, aspartate 188, and asparagine 230.

Belongs to the methyltransferase superfamily. PrmA family.

The protein resides in the cytoplasm. The enzyme catalyses L-lysyl-[protein] + 3 S-adenosyl-L-methionine = N(6),N(6),N(6)-trimethyl-L-lysyl-[protein] + 3 S-adenosyl-L-homocysteine + 3 H(+). Functionally, methylates ribosomal protein L11. In Shigella sonnei (strain Ss046), this protein is Ribosomal protein L11 methyltransferase.